Consider the following 231-residue polypeptide: 5'-methylthioadenosine/S-adenosylhomocysteine nucleosidase (231 aa).

E12 functions as the Proton acceptor in the catalytic mechanism. Substrate is bound by residues G78, V153, and 174–175; that span reads ME. The active-site Proton donor is D198.

It belongs to the PNP/UDP phosphorylase family. MtnN subfamily.

The enzyme catalyses S-adenosyl-L-homocysteine + H2O = S-(5-deoxy-D-ribos-5-yl)-L-homocysteine + adenine. It carries out the reaction S-methyl-5'-thioadenosine + H2O = 5-(methylsulfanyl)-D-ribose + adenine. The catalysed reaction is 5'-deoxyadenosine + H2O = 5-deoxy-D-ribose + adenine. It participates in amino-acid biosynthesis; L-methionine biosynthesis via salvage pathway; S-methyl-5-thio-alpha-D-ribose 1-phosphate from S-methyl-5'-thioadenosine (hydrolase route): step 1/2. In terms of biological role, catalyzes the irreversible cleavage of the glycosidic bond in both 5'-methylthioadenosine (MTA) and S-adenosylhomocysteine (SAH/AdoHcy) to adenine and the corresponding thioribose, 5'-methylthioribose and S-ribosylhomocysteine, respectively. Also cleaves 5'-deoxyadenosine, a toxic by-product of radical S-adenosylmethionine (SAM) enzymes, into 5-deoxyribose and adenine. The sequence is that of 5'-methylthioadenosine/S-adenosylhomocysteine nucleosidase from Vibrio parahaemolyticus serotype O3:K6 (strain RIMD 2210633).